The chain runs to 372 residues: D-alanine--D-alanine ligase (372 aa).

The region spanning 145-349 (KTVLRAGGIP…CPNLLDQLIE (205 aa)) is the ATP-grasp domain. Residue 176 to 231 (DRWGTSELFVKAVSLGSSVATLPVKTETEFTKAVKEVFRYDDRLMVEPRIRGREIE) coordinates ATP. Residues aspartate 303, glutamate 316, and asparagine 318 each coordinate Mg(2+).

It belongs to the D-alanine--D-alanine ligase family. It depends on Mg(2+) as a cofactor. Requires Mn(2+) as cofactor.

It is found in the cytoplasm. It carries out the reaction 2 D-alanine + ATP = D-alanyl-D-alanine + ADP + phosphate + H(+). Its pathway is cell wall biogenesis; peptidoglycan biosynthesis. Cell wall formation. This chain is D-alanine--D-alanine ligase, found in Coxiella burnetii (strain RSA 331 / Henzerling II).